Here is a 312-residue protein sequence, read N- to C-terminus: Testis-expressed protein 13B (312 aa).

This sequence belongs to the TEX13 family. Testis specific.

The sequence is that of Testis-expressed protein 13B (TEX13B) from Homo sapiens (Human).